The chain runs to 69 residues: Ubiquitin-ribosomal protein eL40 fusion protein (69 aa).

The region spanning 1 to 17 (NIQKESTLHLVLRLRGG) is the Ubiquitin-like domain. A Glycyl lysine isopeptide (Lys-Gly) (interchain with G-Cter in ubiquitin) cross-link involves residue K4. G17 is covalently cross-linked (Glycyl lysine isopeptide (Gly-Lys) (interchain with K-? in acceptor proteins)). K39 is modified (N6,N6,N6-trimethyllysine).

The protein in the N-terminal section; belongs to the ubiquitin family. This sequence in the C-terminal section; belongs to the eukaryotic ribosomal protein eL40 family. In terms of assembly, part of the 60S ribosomal subunit. Trimethylation of Lys-39 ('Lys-22' of the mature chain) by SMYD5 promotes translation elongation and protein synthesis.

It is found in the cytoplasm. Its subcellular location is the nucleus. Functionally, exists either covalently attached to another protein, or free (unanchored). When covalently bound, it is conjugated to target proteins via an isopeptide bond either as a monomer (monoubiquitin), a polymer linked via different Lys residues of the ubiquitin (polyubiquitin chains) or a linear polymer linked via the initiator Met of the ubiquitin (linear polyubiquitin chains). Polyubiquitin chains, when attached to a target protein, have different functions depending on the Lys residue of the ubiquitin that is linked: Lys-6-linked may be involved in DNA repair; Lys-11-linked is involved in ERAD (endoplasmic reticulum-associated degradation) and in cell-cycle regulation; Lys-29-linked is involved in proteotoxic stress response and cell cycle; Lys-33-linked is involved in kinase modification; Lys-48-linked is involved in protein degradation via the proteasome; Lys-63-linked is involved in endocytosis, DNA-damage responses as well as in signaling processes leading to activation of the transcription factor NF-kappa-B. Linear polymer chains formed via attachment by the initiator Met lead to cell signaling. Ubiquitin is usually conjugated to Lys residues of target proteins, however, in rare cases, conjugation to Cys or Ser residues has been observed. When polyubiquitin is free (unanchored-polyubiquitin), it also has distinct roles, such as in activation of protein kinases, and in signaling. Component of the 60S subunit of the ribosome. The protein is Ubiquitin-ribosomal protein eL40 fusion protein (UBA52) of Gallus gallus (Chicken).